We begin with the raw amino-acid sequence, 897 residues long: DNA polymerase I (897 aa).

The 5'-3' exonuclease domain maps to 1–317 (MEQPVIKEGT…ILDNTPALDN (317 aa)). Positions 318-494 (APKKSRMIVL…RLCEYFEKGG (177 aa)) constitute a 3'-5' exonuclease domain. Positions 498 to 896 (DLLTLARDIE…FIAKRWNELK (399 aa)) are polymerase.

Belongs to the DNA polymerase type-A family. As to quaternary structure, single-chain monomer with multiple functions.

It catalyses the reaction DNA(n) + a 2'-deoxyribonucleoside 5'-triphosphate = DNA(n+1) + diphosphate. Its function is as follows. In addition to polymerase activity, this DNA polymerase exhibits 3'-5' and 5'-3' exonuclease activity. This Helicobacter pylori (strain J99 / ATCC 700824) (Campylobacter pylori J99) protein is DNA polymerase I (polA).